Consider the following 277-residue polypeptide: Methyltransferase adrK (277 aa).

Residues 123-124 (DL), 150-151 (DV), and 151-152 (VL) each bind S-adenosyl-L-methionine.

This sequence belongs to the class I-like SAM-binding methyltransferase superfamily. In terms of assembly, homodimer.

The protein operates within secondary metabolite biosynthesis; terpenoid biosynthesis. Methyltransferase; part of the gene cluster that mediates the biosynthesis of andrastins, meroterpenoid compounds that exhibit inhibitory activity against ras farnesyltransferase, suggesting that they could be promising leads for antitumor agents. The first step of the pathway is the synthesis of 3,5-dimethylorsellinic acid (DMOA) by the polyketide synthase adrD via condensation of one acetyl-CoA starter unit with 3 malonyl-CoA units and 2 methylations. DMAO is then converted to farnesyl-DMAO by the prenyltransferase adrG. The methyltransferase adrK catalyzes the methylation of the carboxyl group of farnesyl-DMAO to farnesyl-DMAO methyl ester which is further converted to epoxyfarnesyl-DMAO methyl ester by the FAD-dependent monooxygenase adrH. The terpene cyclase adrI then catalyzes the carbon skeletal rearrangement to generate the andrastin E, the first compound in the pathway having the andrastin scaffold, with the tetracyclic ring system. The post-cyclization tailoring enzymes adrF, adrE, adrJ, and adrA, are involved in the conversion of andrastin E into andrastin A. The short chain dehydrogenase adrF is responsible for the oxidation of the C-3 a hydroxyl group of andrastin E to yield the corresponding ketone, andrastin D. The ketoreductase adrE stereoselectively reduces the carbonyl moiety to reverse the stereochemistry of the C-3 position to yield andrastin F. The acetyltransferase adrJ is the acetyltransferase that attaches the acetyl group to the C-3 hydroxyl group of andrastin F to yield andrastin C. Finally, the cytochrome P450 monooxygenase adrA catalyzes two sequential oxidation reactions of the C-23 methyl group, to generate the corresponding alcohol andrastin B, and aldehyde andrastin A. This is Methyltransferase adrK from Penicillium rubens (strain ATCC 28089 / DSM 1075 / NRRL 1951 / Wisconsin 54-1255) (Penicillium chrysogenum).